We begin with the raw amino-acid sequence, 436 residues long: Gamma-glutamyl phosphate reductase (436 aa).

Belongs to the gamma-glutamyl phosphate reductase family.

It is found in the cytoplasm. It carries out the reaction L-glutamate 5-semialdehyde + phosphate + NADP(+) = L-glutamyl 5-phosphate + NADPH + H(+). The protein operates within amino-acid biosynthesis; L-proline biosynthesis; L-glutamate 5-semialdehyde from L-glutamate: step 2/2. Functionally, catalyzes the NADPH-dependent reduction of L-glutamate 5-phosphate into L-glutamate 5-semialdehyde and phosphate. The product spontaneously undergoes cyclization to form 1-pyrroline-5-carboxylate. This chain is Gamma-glutamyl phosphate reductase, found in Prochlorococcus marinus subsp. pastoris (strain CCMP1986 / NIES-2087 / MED4).